We begin with the raw amino-acid sequence, 185 residues long: Transcription termination/antitermination protein NusG (185 aa).

The KOW domain occupies 134–162; that stretch reads PGQMVRVIDGPFNDFDGLVEEVNYEKNRL.

It belongs to the NusG family.

Participates in transcription elongation, termination and antitermination. This is Transcription termination/antitermination protein NusG from Xylella fastidiosa (strain 9a5c).